Here is a 786-residue protein sequence, read N- to C-terminus: Pentatricopeptide repeat-containing protein At2g22070 (786 aa).

PPR repeat units follow at residues 48-78, 79-109, 110-144, 145-179, 180-214, 215-241, 242-276, 278-312, 313-347, 350-376, 377-411, 412-446, 447-477, 479-513, 514-548, and 550-580; these read SVYL…MPLR, TAFS…LPQR, DSVS…GIEP, TQFT…GLRG, NVSV…DISS, WNAM…MAER, DIVT…SLLS, DRFT…GFDI, SGIV…DLKI, FTAL…LKDR, DVVA…GQRP, NSYT…GEIY, SVSV…IRCE, DTVS…GLRP, DHIT…DKII, and TLSH…MPIE. Positions 585-660 are type E motif; sequence TWGSLLSACR…EQGFSWIEVK (76 aa). The tract at residues 661 to 691 is type E(+) motif; it reads HKVHVFGVEDGTHPEKNEIYMTMKKIWDEIK. A type DYW motif region spans residues 692–786; that stretch reads KMGYVPDTAS…DGFCSCRDYW (95 aa).

It belongs to the PPR family. PCMP-H subfamily.

The sequence is that of Pentatricopeptide repeat-containing protein At2g22070 (PCMP-H41) from Arabidopsis thaliana (Mouse-ear cress).